The chain runs to 488 residues: Glutamyl-tRNA(Gln) amidotransferase subunit A (488 aa).

Catalysis depends on charge relay system residues Lys77 and Ser152. Ser176 acts as the Acyl-ester intermediate in catalysis.

Belongs to the amidase family. GatA subfamily. In terms of assembly, heterotrimer of A, B and C subunits.

It carries out the reaction L-glutamyl-tRNA(Gln) + L-glutamine + ATP + H2O = L-glutaminyl-tRNA(Gln) + L-glutamate + ADP + phosphate + H(+). Its function is as follows. Allows the formation of correctly charged Gln-tRNA(Gln) through the transamidation of misacylated Glu-tRNA(Gln) in organisms which lack glutaminyl-tRNA synthetase. The reaction takes place in the presence of glutamine and ATP through an activated gamma-phospho-Glu-tRNA(Gln). This is Glutamyl-tRNA(Gln) amidotransferase subunit A from Streptococcus pyogenes serotype M28 (strain MGAS6180).